The following is a 361-amino-acid chain: MGNVLAASSPPAGPPPPPAPPLVGLPPPPPSPPGFTLPPLGGGLGAGAGTGRGSERTPGTAAASAGGTADDGACGCLPNPGTFEECHRKCKELFPIQMEGVKLTVNKGLSNHFQVNHTVALSTIGESNYHFGVTYVGTKQLSPTEAFPVLVGDMDNSGSLNAQVIHQLGPGLRSKMAIQTQQSKFVNWQVDGEYRGSDFTAAVTLGNPDVLVGSGILVAHYLQSITPCLALGGELVYHRRPGEEGAVMSLAGKYTLNNWLATVTLGQAGMHATYYHKASDQLQVGVEFEASTRMQDTSVSFGYQLDLPKANLLFKGSVDSNWIVGATLEKKLPPLPLTLALGAFLNHRKNKFQCGFGLTIG.

Residues Met-1 to Pro-10 are compositionally biased toward low complexity. Residues Met-1–Asp-71 form a disordered region. The segment covering Pro-11 to Thr-36 has biased composition (pro residues). The segment covering Leu-40–Arg-52 has biased composition (gly residues). A compositionally biased stretch (low complexity) spans Gly-59 to Asp-71.

This sequence belongs to the Tom40 family. Forms part of the preprotein translocase complex of the outer mitochondrial membrane (TOM complex) which consists of at least 7 different proteins (TOMM5, TOMM6, TOMM7, TOMM20, TOMM22, TOMM40 and TOMM70). Interacts with mitochondrial targeting sequences. Interacts with TIMM29; linking the TIM22 complex to the TOM complex. Forms a complex with BCAP31 (via C-terminus) which mediates the translocation of components of the mitochondrial membrane respiratory chain NADH dehydrogenase (Complex I) from the cytosol to the mitochondria. Interacts (via N-terminus) with CYP1A1 (via mitochondrial targeting signal); this interaction is required for CYP1A1 translocation across the mitochondrial outer membrane.

The protein resides in the mitochondrion outer membrane. Its function is as follows. Channel-forming protein essential for import of protein precursors into mitochondria. Plays a role in the assembly of the mitochondrial membrane respiratory chain NADH dehydrogenase (Complex I) by forming a complex with BCAP31 and mediating the translocation of Complex I components from the cytosol to the mitochondria. This Bos taurus (Bovine) protein is Mitochondrial import receptor subunit TOM40 homolog.